Here is a 218-residue protein sequence, read N- to C-terminus: MALVPYDENVLPALSKLHQSSAEFTLANHRIRLSQDWKRLGVAAVVWDAAVVLCMFLEMGKVDLKGKRVIELGAGTGLVGIVAALLGANVTITDREPALEFLTANVHENIPQGRQKAVQVSELTWGENLDLYPQGGYDLILGADIVYLEETFPALLQTLEHLSSGDTVVLLSCRIRYERDERFLTELRQRFSVQEVHYDSQRDIHVYRAVKNKSNTEL.

S-adenosyl-L-methionine is bound by residues Trp-47, 73 to 75 (GAG), Asp-94, Trp-125, and Ala-143.

Belongs to the methyltransferase superfamily. METTL21 family.

The protein localises to the cytoplasm. It catalyses the reaction L-lysyl-[protein] + 3 S-adenosyl-L-methionine = N(6),N(6),N(6)-trimethyl-L-lysyl-[protein] + 3 S-adenosyl-L-homocysteine + 3 H(+). Its function is as follows. Protein-lysine methyltransferase that selectively trimethylates residues in heat shock protein 70 (HSP70) family members. This chain is Protein N-lysine methyltransferase METTL21A (mettl21a), found in Danio rerio (Zebrafish).